The sequence spans 246 residues: Small ribosomal subunit protein uS2 (246 aa).

The tract at residues 224 to 246 (AKQGEESAETEAKEAETTETTTA) is disordered. A compositionally biased stretch (basic and acidic residues) spans 225-239 (KQGEESAETEAKEAE).

The protein belongs to the universal ribosomal protein uS2 family.

This Bacillus licheniformis (strain ATCC 14580 / DSM 13 / JCM 2505 / CCUG 7422 / NBRC 12200 / NCIMB 9375 / NCTC 10341 / NRRL NRS-1264 / Gibson 46) protein is Small ribosomal subunit protein uS2.